The following is a 324-amino-acid chain: Quinolinate synthase (324 aa).

Residues histidine 44 and serine 62 each contribute to the iminosuccinate site. Position 107 (cysteine 107) interacts with [4Fe-4S] cluster. Residues 133-135 (YVN) and serine 150 contribute to the iminosuccinate site. Cysteine 192 provides a ligand contact to [4Fe-4S] cluster. Iminosuccinate-binding positions include 218–220 (HPE) and threonine 235. Cysteine 278 serves as a coordination point for [4Fe-4S] cluster.

Belongs to the quinolinate synthase family. Type 2 subfamily. The cofactor is [4Fe-4S] cluster.

It is found in the cytoplasm. The enzyme catalyses iminosuccinate + dihydroxyacetone phosphate = quinolinate + phosphate + 2 H2O + H(+). It functions in the pathway cofactor biosynthesis; NAD(+) biosynthesis; quinolinate from iminoaspartate: step 1/1. Functionally, catalyzes the condensation of iminoaspartate with dihydroxyacetone phosphate to form quinolinate. The chain is Quinolinate synthase from Leptospira interrogans serogroup Icterohaemorrhagiae serovar copenhageni (strain Fiocruz L1-130).